The primary structure comprises 271 residues: Transmembrane protein 33 homolog (271 aa).

A disordered region spans residues 1 to 32; that stretch reads MVEIVEEPDDHQSSSTGAGSSGSSSAPPPPPP. The span at 13–25 shows a compositional bias: low complexity; that stretch reads SSSTGAGSSGSSS. The next 3 helical transmembrane spans lie at 56–76, 125–145, and 180–200; these read VLTV…VPAH, VVFL…IYAA, and ALGI…SLIF.

Belongs to the PER33/POM33 family.

It is found in the membrane. The protein is Transmembrane protein 33 homolog of Caenorhabditis elegans.